The following is a 63-amino-acid chain: 2-hydroxymuconate tautomerase (63 aa).

Pro2 serves as the catalytic Proton acceptor; via imino nitrogen.

It belongs to the 4-oxalocrotonate tautomerase family. Homohexamer.

The catalysed reaction is (2Z,4E)-2-hydroxyhexa-2,4-dienedioate = (3E)-2-oxohex-3-enedioate. The protein operates within aromatic compound metabolism; salicylate degradation. Catalyzes the ketonization of 2-hydroxymuconate stereoselectively to yield 2-oxo-3-hexenedioate. In Pseudomonas putida (Arthrobacter siderocapsulatus), this protein is 2-hydroxymuconate tautomerase (tdnL).